Reading from the N-terminus, the 561-residue chain is Putative transport protein YbjL (561 aa).

The next 5 membrane-spanning stretches (helical) occupy residues 8-28 (LLNG…LCLG), 32-52 (LGSV…LLGQ), 66-86 (FMLF…SIFF), 94-114 (MLAL…GKLF), and 158-178 (NLSL…IVGA). 2 consecutive RCK C-terminal domains span residues 200–288 (RGLD…SFRN) and 292–373 (VFDR…RIGF). The next 5 helical transmembrane spans lie at 383–403 (LLAF…TFQF), 406–426 (FSFG…LGFL), 447–467 (FGLM…ISNG), 475–495 (MLIA…LFGA), and 540–560 (AIAN…WPGL).

Belongs to the AAE transporter (TC 2.A.81) family. YbjL subfamily.

It localises to the cell membrane. The chain is Putative transport protein YbjL from Salmonella agona (strain SL483).